Reading from the N-terminus, the 807-residue chain is DNA gyrase subunit B (807 aa).

Residues 429–543 form the Toprim domain; it reads SELFIVEGDS…KGYLYIAQPP (115 aa). Residues glutamate 435, aspartate 508, and aspartate 510 each coordinate Mg(2+).

It belongs to the type II topoisomerase GyrB family. Heterotetramer, composed of two GyrA and two GyrB chains. In the heterotetramer, GyrA contains the active site tyrosine that forms a transient covalent intermediate with DNA, while GyrB binds cofactors and catalyzes ATP hydrolysis. Mg(2+) serves as cofactor. Requires Mn(2+) as cofactor. Ca(2+) is required as a cofactor.

It localises to the cytoplasm. It catalyses the reaction ATP-dependent breakage, passage and rejoining of double-stranded DNA.. Its function is as follows. A type II topoisomerase that negatively supercoils closed circular double-stranded (ds) DNA in an ATP-dependent manner to modulate DNA topology and maintain chromosomes in an underwound state. Negative supercoiling favors strand separation, and DNA replication, transcription, recombination and repair, all of which involve strand separation. Also able to catalyze the interconversion of other topological isomers of dsDNA rings, including catenanes and knotted rings. Type II topoisomerases break and join 2 DNA strands simultaneously in an ATP-dependent manner. In Rickettsia prowazekii (strain Madrid E), this protein is DNA gyrase subunit B.